The primary structure comprises 151 residues: Deoxyuridine 5'-triphosphate nucleotidohydrolase (151 aa).

Residues 70–72 (RSG), Asn-83, 87–89 (LID), and Met-97 contribute to the substrate site.

This sequence belongs to the dUTPase family. Mg(2+) serves as cofactor.

It catalyses the reaction dUTP + H2O = dUMP + diphosphate + H(+). It functions in the pathway pyrimidine metabolism; dUMP biosynthesis; dUMP from dCTP (dUTP route): step 2/2. Its function is as follows. This enzyme is involved in nucleotide metabolism: it produces dUMP, the immediate precursor of thymidine nucleotides and it decreases the intracellular concentration of dUTP so that uracil cannot be incorporated into DNA. In Actinobacillus pleuropneumoniae serotype 5b (strain L20), this protein is Deoxyuridine 5'-triphosphate nucleotidohydrolase.